The chain runs to 176 residues: Peptide deformylase (176 aa).

Cysteine 92 and histidine 134 together coordinate Fe cation. Residue glutamate 135 is part of the active site. Residue histidine 138 coordinates Fe cation.

The protein belongs to the polypeptide deformylase family. It depends on Fe(2+) as a cofactor.

It catalyses the reaction N-terminal N-formyl-L-methionyl-[peptide] + H2O = N-terminal L-methionyl-[peptide] + formate. Its function is as follows. Removes the formyl group from the N-terminal Met of newly synthesized proteins. Requires at least a dipeptide for an efficient rate of reaction. N-terminal L-methionine is a prerequisite for activity but the enzyme has broad specificity at other positions. The sequence is that of Peptide deformylase from Acinetobacter baumannii (strain SDF).